The following is a 256-amino-acid chain: MATQRKHLVKDFNPYITCYICKGYLIKPTTVTECLHTFCKTCIVQHFEDSNDCPRCGNQVHETNPLEMLRLDNTLEEIIFKLVPGLREQELERESEFWKKNKPQENGQDDTSKADKPKVDEEGDENEDDKDYHRSDPQIAICLDCLRNNGQSGDNVVKGLMKKFIRCSTRVTVGTIKKFLSLKLKLPSSYELDVLCNGEIMGKDHTMEFIYMTRWRLRGENFRCLNCSASQVCSQDGPLYQSYPMVLQYRPRIDFG.

An RING-type zinc finger spans residues 18–57; the sequence is CYICKGYLIKPTTVTECLHTFCKTCIVQHFEDSNDCPRCG. Basic and acidic residues-rich tracts occupy residues 94 to 103 and 110 to 120; these read ESEFWKKNKP and DTSKADKPKVD. The disordered stretch occupies residues 94–133; it reads ESEFWKKNKPQENGQDDTSKADKPKVDEEGDENEDDKDYH.

As to quaternary structure, component of a PRC1-like complex that contains PCGF5, RNF2 and UBE2D3. Interacts with RNF2; the interaction is direct. Interacts with CBX6, CBX7 and CBX8. Interacts with AUTS2; the interaction is direct. Identified in a complex that contains AUTS2, PCGF5, CSNK2B and RNF2.

The protein resides in the nucleus. Its subcellular location is the nucleoplasm. Functionally, component of a Polycomb group (PcG) multiprotein PRC1-like complex, a complex class required to maintain the transcriptionally repressive state of many genes, including Hox genes, throughout development. PcG PRC1 complex acts via chromatin remodeling and modification of histones; it mediates monoubiquitination of histone H2A 'Lys-119', rendering chromatin heritably changed in its expressibility. Within the PRC1-like complex, regulates RNF2 ubiquitin ligase activity. Plays a redundant role with PCGF3 as part of a PRC1-like complex that mediates monoubiquitination of histone H2A 'Lys-119' on the X chromosome and is required for normal silencing of one copy of the X chromosome in XX females. This chain is Polycomb group RING finger protein 5 (PCGF5), found in Homo sapiens (Human).